The following is a 243-amino-acid chain: 3-deoxy-manno-octulosonate cytidylyltransferase (243 aa).

It belongs to the KdsB family.

It localises to the cytoplasm. The catalysed reaction is 3-deoxy-alpha-D-manno-oct-2-ulosonate + CTP = CMP-3-deoxy-beta-D-manno-octulosonate + diphosphate. It functions in the pathway nucleotide-sugar biosynthesis; CMP-3-deoxy-D-manno-octulosonate biosynthesis; CMP-3-deoxy-D-manno-octulosonate from 3-deoxy-D-manno-octulosonate and CTP: step 1/1. The protein operates within bacterial outer membrane biogenesis; lipopolysaccharide biosynthesis. Functionally, activates KDO (a required 8-carbon sugar) for incorporation into bacterial lipopolysaccharide in Gram-negative bacteria. This Helicobacter pylori (strain HPAG1) protein is 3-deoxy-manno-octulosonate cytidylyltransferase.